We begin with the raw amino-acid sequence, 199 residues long: Small ribosomal subunit protein uS5 (199 aa).

Residues 1 to 28 form a disordered region; it reads MARTPNTDRRQRGGDDQRNRSPRSDERD. In terms of domain architecture, S5 DRBM spans 31-94; it reads FLDKLVHINR…DQAKRTMIKV (64 aa).

It belongs to the universal ribosomal protein uS5 family. Part of the 30S ribosomal subunit. Contacts proteins S4 and S8.

Functionally, with S4 and S12 plays an important role in translational accuracy. Its function is as follows. Located at the back of the 30S subunit body where it stabilizes the conformation of the head with respect to the body. This Rhodospirillum rubrum (strain ATCC 11170 / ATH 1.1.1 / DSM 467 / LMG 4362 / NCIMB 8255 / S1) protein is Small ribosomal subunit protein uS5.